Consider the following 182-residue polypeptide: ATP synthase subunit b 1 (182 aa).

The chain crosses the membrane as a helical span at residues Phe24 to Ile44.

The protein belongs to the ATPase B chain family. F-type ATPases have 2 components, F(1) - the catalytic core - and F(0) - the membrane proton channel. F(1) has five subunits: alpha(3), beta(3), gamma(1), delta(1), epsilon(1). F(0) has three main subunits: a(1), b(2) and c(10-14). The alpha and beta chains form an alternating ring which encloses part of the gamma chain. F(1) is attached to F(0) by a central stalk formed by the gamma and epsilon chains, while a peripheral stalk is formed by the delta and b chains.

The protein localises to the cell inner membrane. Functionally, f(1)F(0) ATP synthase produces ATP from ADP in the presence of a proton or sodium gradient. F-type ATPases consist of two structural domains, F(1) containing the extramembraneous catalytic core and F(0) containing the membrane proton channel, linked together by a central stalk and a peripheral stalk. During catalysis, ATP synthesis in the catalytic domain of F(1) is coupled via a rotary mechanism of the central stalk subunits to proton translocation. Component of the F(0) channel, it forms part of the peripheral stalk, linking F(1) to F(0). The polypeptide is ATP synthase subunit b 1 (Rhodospirillum rubrum (strain ATCC 11170 / ATH 1.1.1 / DSM 467 / LMG 4362 / NCIMB 8255 / S1)).